The chain runs to 425 residues: (S)-6-hydroxynicotine oxidase (425 aa).

FAD contacts are provided by residues Ser-12, Glu-31, 38-39 (GR), and 56-59 (GGAY). Residue Asn-166 coordinates (S)-6-hydroxynicotine. Val-226 lines the FAD pocket. 3 residues coordinate (S)-6-hydroxynicotine: Tyr-311, Phe-326, and Trp-371. FAD contacts are provided by residues Ser-398 and 406 to 408 (GYI). Tyr-407 provides a ligand contact to (S)-6-hydroxynicotine.

This sequence belongs to the flavin monoamine oxidase family. Homodimer. Requires FAD as cofactor.

Its subcellular location is the cytoplasm. It carries out the reaction (S)-6-hydroxynicotine + O2 + H2O = 6-hydroxypseudooxynicotine + H2O2. The enzyme catalyses (S)-6-hydroxynicotine + O2 = 6-hydroxy-N-methylmyosmine + H2O2. The protein operates within alkaloid degradation; nicotine degradation; 6-hydroxypseudooxynicotine from nicotine (S-isomer route): step 2/2. Inhibited by (R)-6-hydroxynicotine. Inhibited by high concentrations of phenanthroline. Activity is strongly affected by Hg(2+) and p-chloromercuriphenylsulfonate, but not by N-ethylmaleimide and 5,5'-dithiobis-(2-nitrobenzoate). In terms of biological role, involved in the degradation of L-nicotine. Catalyzes the oxidation of (S)-6-hydroxynicotine (6-hydroxy-L-nicotine) to 6-hydroxypseudooxynicotine. Oxidation of the pyrrolidine ring of (S)-6-hydroxynicotine leads to the formation of the optically inactive 6-hydroxy-N-methylmyosmine, which hydrolyzes spontaneously to 6-hydroxypseudooxynicotine. Acts with absolute stereospecificity on the L-form of 6-hydroxynicotine. Can also use (S)-6-hydroxynornicotine. The sequence is that of (S)-6-hydroxynicotine oxidase from Paenarthrobacter nicotinovorans (Arthrobacter nicotinovorans).